Reading from the N-terminus, the 42-residue chain is Photosystem I reaction center subunit IX (42 aa).

Residues 7 to 27 (YLSTAPVLAAVWFTVLAGILI) traverse the membrane as a helical segment.

It belongs to the PsaJ family.

It localises to the plastid. It is found in the chloroplast thylakoid membrane. Functionally, may help in the organization of the PsaE and PsaF subunits. In Ostreococcus tauri, this protein is Photosystem I reaction center subunit IX.